The primary structure comprises 440 residues: Enolase 1-2 (440 aa).

The substrate site is built by histidine 160 and glutamate 169. Glutamate 212 (proton donor) is an active-site residue. Residues aspartate 247, glutamate 296, and aspartate 321 each coordinate Mg(2+). Substrate-binding residues include glutamate 296 and aspartate 321. Residue lysine 346 is the Proton acceptor of the active site. Substrate contacts are provided by residues 373–376 and lysine 397; that span reads SHRS.

Belongs to the enolase family. As to quaternary structure, homodimer. It depends on Mg(2+) as a cofactor.

It localises to the cytoplasm. It catalyses the reaction (2R)-2-phosphoglycerate = phosphoenolpyruvate + H2O. It participates in carbohydrate degradation; glycolysis; pyruvate from D-glyceraldehyde 3-phosphate: step 4/5. The chain is Enolase 1-2 (eno102) from Schizosaccharomyces pombe (strain 972 / ATCC 24843) (Fission yeast).